The following is a 137-amino-acid chain: MPTINQLVRKPRKSKVEKSKSPALNVGYNSHKKVQTNVSSPQKRGVATRVGTMTPKKPNSALRKFARVRLSNLIEVTAYIPGIGHNLQEHSVVLLRGGRVKDLPGVRYHIVRGALDTAGVNDRKQGRSKYGTKRPKA.

Positions 1–57 (MPTINQLVRKPRKSKVEKSKSPALNVGYNSHKKVQTNVSSPQKRGVATRVGTMTPKK) are disordered. D102 bears the 3-methylthioaspartic acid mark.

This sequence belongs to the universal ribosomal protein uS12 family. Part of the 30S ribosomal subunit. Contacts proteins S8 and S17. May interact with IF1 in the 30S initiation complex.

In terms of biological role, with S4 and S5 plays an important role in translational accuracy. Interacts with and stabilizes bases of the 16S rRNA that are involved in tRNA selection in the A site and with the mRNA backbone. Located at the interface of the 30S and 50S subunits, it traverses the body of the 30S subunit contacting proteins on the other side and probably holding the rRNA structure together. The combined cluster of proteins S8, S12 and S17 appears to hold together the shoulder and platform of the 30S subunit. The chain is Small ribosomal subunit protein uS12 from Streptococcus pneumoniae serotype 2 (strain D39 / NCTC 7466).